A 456-amino-acid polypeptide reads, in one-letter code: 3-isopropylmalate dehydratase large subunit (456 aa).

[4Fe-4S] cluster is bound by residues cysteine 336, cysteine 396, and cysteine 399.

Belongs to the aconitase/IPM isomerase family. LeuC type 1 subfamily. Heterodimer of LeuC and LeuD. The cofactor is [4Fe-4S] cluster.

The enzyme catalyses (2R,3S)-3-isopropylmalate = (2S)-2-isopropylmalate. Its pathway is amino-acid biosynthesis; L-leucine biosynthesis; L-leucine from 3-methyl-2-oxobutanoate: step 2/4. Its function is as follows. Catalyzes the isomerization between 2-isopropylmalate and 3-isopropylmalate, via the formation of 2-isopropylmaleate. In Staphylococcus saprophyticus subsp. saprophyticus (strain ATCC 15305 / DSM 20229 / NCIMB 8711 / NCTC 7292 / S-41), this protein is 3-isopropylmalate dehydratase large subunit.